The chain runs to 159 residues: Nutritionally-regulated adipose and cardiac-enriched protein homolog (159 aa).

Residues 1-67 are disordered; that stretch reads MKTAVHALSP…GDEPRRTTRH (67 aa). 2 stretches are compositionally biased toward basic and acidic residues: residues 12 to 25 and 50 to 63; these read SRPETQHQTRKNEE and SPQERCGRGDEPRR. The chain crosses the membrane as a helical span at residues 107-124; sequence LTACILLALALGMCCGQA.

Its subcellular location is the cell membrane. The protein is Nutritionally-regulated adipose and cardiac-enriched protein homolog (NRAC) of Bos taurus (Bovine).